The following is a 148-amino-acid chain: Large ribosomal subunit protein uL15 (148 aa).

The disordered stretch occupies residues methionine 1–valine 47.

The protein belongs to the universal ribosomal protein uL15 family. Part of the 50S ribosomal subunit.

Binds to the 23S rRNA. The chain is Large ribosomal subunit protein uL15 from Kosmotoga olearia (strain ATCC BAA-1733 / DSM 21960 / TBF 19.5.1).